The chain runs to 463 residues: Cysteine--tRNA ligase (463 aa).

A Zn(2+)-binding site is contributed by cysteine 33. The 'HIGH' region signature appears at 35–45 (PTVYDFAHIGN). The Zn(2+) site is built by cysteine 221, histidine 246, and glutamate 250. The short motif at 279 to 283 (KMSKS) is the 'KMSKS' region element. Lysine 282 is an ATP binding site.

The protein belongs to the class-I aminoacyl-tRNA synthetase family. As to quaternary structure, monomer. Zn(2+) serves as cofactor.

The protein localises to the cytoplasm. It carries out the reaction tRNA(Cys) + L-cysteine + ATP = L-cysteinyl-tRNA(Cys) + AMP + diphosphate. The protein is Cysteine--tRNA ligase of Rhizobium leguminosarum bv. trifolii (strain WSM2304).